A 919-amino-acid chain; its full sequence is Alanine--tRNA ligase (919 aa).

Zn(2+) is bound by residues histidine 565, histidine 569, cysteine 667, and histidine 671.

It belongs to the class-II aminoacyl-tRNA synthetase family. The cofactor is Zn(2+).

It is found in the cytoplasm. The catalysed reaction is tRNA(Ala) + L-alanine + ATP = L-alanyl-tRNA(Ala) + AMP + diphosphate. Functionally, catalyzes the attachment of alanine to tRNA(Ala) in a two-step reaction: alanine is first activated by ATP to form Ala-AMP and then transferred to the acceptor end of tRNA(Ala). Also edits incorrectly charged Ser-tRNA(Ala) and Gly-tRNA(Ala) via its editing domain. The sequence is that of Alanine--tRNA ligase from Leptospira biflexa serovar Patoc (strain Patoc 1 / Ames).